The sequence spans 199 residues: Putative pseudouridine methyltransferase (199 aa).

Residues leucine 132 and cysteine 186 each coordinate S-adenosyl-L-methionine.

Belongs to the methyltransferase superfamily. TrmY family.

It localises to the cytoplasm. This chain is Putative pseudouridine methyltransferase, found in Vibrio campbellii (strain ATCC BAA-1116).